A 222-amino-acid polypeptide reads, in one-letter code: Charged multivesicular body protein 4a (222 aa).

Disordered stretches follow at residues 1 to 21 and 180 to 211; these read MSGL…TPEE and VGDK…DEDE. The interval 1–116 is interaction with phosphoinosides; that stretch reads MSGLGRLFGK…ELAAQSMKKA (116 aa). Residues 1–150 form an intramolecular interaction with C-terminus region; sequence MSGLGRLFGK…QISDAISRPM (150 aa). 2 coiled-coil regions span residues 20–105 and 155–180; these read EEAI…VLRT and DVDE…LLNV. An intramolecular interaction with N-terminus region spans residues 151–222; the sequence is GFGDDVDEDE…ALKQLAEWVS (72 aa). Position 196 is a phosphoserine (Ser-196).

It belongs to the SNF7 family. Probable core component of the endosomal sorting required for transport complex III (ESCRT-III). ESCRT-III components are thought to multimerize to form a flat lattice on the perimeter membrane of the endosome. Several assembly forms of ESCRT-III may exist that interact and act sequentially. Self-associates; overexpression leads to the assembly of filaments that curve and associate to create circular rings. Interacts with CHMP2A. Interacts with CHMP3; the interaction requires the release of CHMP4A autoinhibition. Interacts with CHMP4B. Interacts with CHMP4C. Interacts with CHMP6. Interacts with VPS4A. Interacts with PDCD6IP; the interaction is direct. Widely expressed. Expressed at higher level in heart, kidney, liver and skeletal muscle. Also expressed in brain, placenta, lung and pancreas.

Its subcellular location is the cytoplasmic vesicle membrane. The protein resides in the late endosome membrane. Its function is as follows. Probable core component of the endosomal sorting required for transport complex III (ESCRT-III) which is involved in multivesicular bodies (MVBs) formation and sorting of endosomal cargo proteins into MVBs. MVBs contain intraluminal vesicles (ILVs) that are generated by invagination and scission from the limiting membrane of the endosome and mostly are delivered to lysosomes enabling degradation of membrane proteins, such as stimulated growth factor receptors, lysosomal enzymes and lipids. The MVB pathway appears to require the sequential function of ESCRT-O, -I,-II and -III complexes. ESCRT-III proteins mostly dissociate from the invaginating membrane before the ILV is released. The ESCRT machinery also functions in topologically equivalent membrane fission events, such as the terminal stages of cytokinesis and the budding of enveloped viruses (HIV-1 and other lentiviruses). ESCRT-III proteins are believed to mediate the necessary vesicle extrusion and/or membrane fission activities, possibly in conjunction with the AAA ATPase VPS4. When overexpressed, membrane-assembled circular arrays of CHMP4A filaments can promote or stabilize negative curvature and outward budding. Via its interaction with PDCD6IP involved in HIV-1 p6- and p9-dependent virus release. CHMP4A/B/C are required for the exosomal release of SDCBP, CD63 and syndecan. The polypeptide is Charged multivesicular body protein 4a (CHMP4A) (Homo sapiens (Human)).